The sequence spans 353 residues: Photosystem II D2 protein (353 aa).

Position 2 is an N-acetylthreonine (T2). Phosphothreonine is present on T2. The helical transmembrane segment at 41 to 61 (CAYFALGGWFTGTTFVTSWYT) threads the bilayer. H118 contributes to the chlorophyll a binding site. Residues 125 to 141 (GFMLRQFELARPVQLRP) form a helical membrane-spanning segment. Pheophytin a is bound by residues Q130 and N143. A helical transmembrane segment spans residues 153 to 166 (VFLSVFLIYPLGQS). H198 is a binding site for chlorophyll a. Residues 208-228 (AVLLCAIHGATVENTLFEDGD) form a helical membrane-spanning segment. Positions 215 and 262 each coordinate a plastoquinone. H215 serves as a coordination point for Fe cation. H269 lines the Fe cation pocket. The helical transmembrane segment at 279–295 (GLWMSAIGVVGLALNLR) threads the bilayer.

This sequence belongs to the reaction center PufL/M/PsbA/D family. PSII is composed of 1 copy each of membrane proteins PsbA, PsbB, PsbC, PsbD, PsbE, PsbF, PsbH, PsbI, PsbJ, PsbK, PsbL, PsbM, PsbT, PsbX, PsbY, PsbZ, Psb30/Ycf12, at least 3 peripheral proteins of the oxygen-evolving complex and a large number of cofactors. It forms dimeric complexes. The D1/D2 heterodimer binds P680, chlorophylls that are the primary electron donor of PSII, and subsequent electron acceptors. It shares a non-heme iron and each subunit binds pheophytin, quinone, additional chlorophylls, carotenoids and lipids. There is also a Cl(-1) ion associated with D1 and D2, which is required for oxygen evolution. The PSII complex binds additional chlorophylls, carotenoids and specific lipids. is required as a cofactor. Post-translationally, only phosphorylated in mesophyll cells, phosphorylation increases when cells are grown under high rather than low light regimes (70 vs 900 umol photons/m-2/s).

The protein resides in the plastid. Its subcellular location is the chloroplast thylakoid membrane. It carries out the reaction 2 a plastoquinone + 4 hnu + 2 H2O = 2 a plastoquinol + O2. Its function is as follows. Photosystem II (PSII) is a light-driven water:plastoquinone oxidoreductase that uses light energy to abstract electrons from H(2)O, generating O(2) and a proton gradient subsequently used for ATP formation. It consists of a core antenna complex that captures photons, and an electron transfer chain that converts photonic excitation into a charge separation. The D1/D2 (PsbA/PsbD) reaction center heterodimer binds P680, the primary electron donor of PSII as well as several subsequent electron acceptors. D2 is needed for assembly of a stable PSII complex. This is Photosystem II D2 protein from Zea mays (Maize).